Consider the following 384-residue polypeptide: S-adenosylmethionine synthase (384 aa).

Residue H15 coordinates ATP. D17 is a binding site for Mg(2+). Position 43 (E43) interacts with K(+). L-methionine contacts are provided by E56 and Q99. The segment at 99 to 109 is flexible loop; the sequence is QSADINQGVDR. ATP is bound by residues 164–166, 230–231, D239, 245–246, A262, and K266; these read DAK, RF, and RK. D239 contributes to the L-methionine binding site. Position 270 (K270) interacts with L-methionine.

The protein belongs to the AdoMet synthase family. In terms of assembly, homotetramer; dimer of dimers. Requires Mg(2+) as cofactor. It depends on K(+) as a cofactor.

It is found in the cytoplasm. It carries out the reaction L-methionine + ATP + H2O = S-adenosyl-L-methionine + phosphate + diphosphate. The protein operates within amino-acid biosynthesis; S-adenosyl-L-methionine biosynthesis; S-adenosyl-L-methionine from L-methionine: step 1/1. Catalyzes the formation of S-adenosylmethionine (AdoMet) from methionine and ATP. The overall synthetic reaction is composed of two sequential steps, AdoMet formation and the subsequent tripolyphosphate hydrolysis which occurs prior to release of AdoMet from the enzyme. This is S-adenosylmethionine synthase from Haemophilus influenzae (strain ATCC 51907 / DSM 11121 / KW20 / Rd).